The chain runs to 287 residues: Chlorophyll a-b binding protein CP29.2, chloroplastic (287 aa).

A chloroplast-targeting transit peptide spans 1–31 (MAATSTAAAASSIMGTRVVSDISSNSSRFTA). Arg-32 carries the N2-acetylarginine modification. Phosphothreonine is present on Thr-37. Trp-55 contributes to the chlorophyll b binding site. Residue Phe-75 participates in chlorophyll a binding. A phosphothreonine mark is found at Thr-109 and Thr-111. Positions 137 and 140 each coordinate chlorophyll a. The chain crosses the membrane as a helical span at residues 143–163 (WAMLATLGAITVEWLTGVTWQ). Position 177 (Leu-177) interacts with chlorophyll a. The chain crosses the membrane as a helical span at residues 181–201 (LPFSISTLIWIEVLVIGYIEF). Chlorophyll b contacts are provided by Glu-200 and Arg-203. Glu-239, His-242, Arg-244, Gln-256, and His-271 together coordinate chlorophyll a. The helical transmembrane segment at 245–265 (LAMVGFLGFAVQAAATGKGPL) threads the bilayer.

Belongs to the light-harvesting chlorophyll a/b-binding (LHC) protein family. In terms of assembly, the LHC complex consists of chlorophyll a-b binding proteins. Binds at least 14 chlorophylls (8 Chl-a and 6 Chl-b) and carotenoids such as lutein and neoxanthin. serves as cofactor. Post-translationally, photoregulated by reversible phosphorylation of its threonine residues.

The protein localises to the plastid. It localises to the chloroplast thylakoid membrane. In terms of biological role, the light-harvesting complex (LHC) functions as a light receptor, it captures and delivers excitation energy to photosystems with which it is closely associated. The sequence is that of Chlorophyll a-b binding protein CP29.2, chloroplastic (LHCB4.2) from Arabidopsis thaliana (Mouse-ear cress).